A 589-amino-acid polypeptide reads, in one-letter code: Proton pump-interactor 2 (589 aa).

Residues 205–245 are a coiled coil; the sequence is EDSLAEKEASINRVKSMAVELNEVKKELDAITWKINHLSDK. 4 stretches are compositionally biased toward basic and acidic residues: residues 370–383, 395–408, 426–450, and 504–534; these read KGGE…REDS, TDKR…KAMD, VYEK…REEQ, and ESDH…KERS. Disordered regions lie at residues 370–450 and 485–534; these read KGGE…REEQ and KECE…KERS. The stretch at 431 to 500 forms a coiled coil; sequence KKEEEEVDEE…AKKKAAANSS (70 aa). The chain crosses the membrane as a helical span at residues 568-588; sequence WVWGLSSAALAVALFLVVLLL.

This sequence belongs to the plant Proton pump-interactor protein family. As to expression, expressed in seedlings and flowers.

The protein localises to the cell membrane. It is found in the endoplasmic reticulum membrane. In terms of biological role, may regulate plasma membrane ATPase activity. The chain is Proton pump-interactor 2 (PPI2) from Arabidopsis thaliana (Mouse-ear cress).